A 459-amino-acid polypeptide reads, in one-letter code: Ribulose bisphosphate carboxylase large chain (459 aa).

Lys4 is subject to N6,N6,N6-trimethyllysine. Asn113 and Thr163 together coordinate substrate. The Proton acceptor role is filled by Lys165. Lys167 contacts substrate. The Mg(2+) site is built by Lys191, Asp193, and Glu194. N6-carboxylysine is present on Lys191. His284 functions as the Proton acceptor in the catalytic mechanism. Substrate-binding residues include Arg285, His317, and Ser369.

The protein belongs to the RuBisCO large chain family. Type I subfamily. In terms of assembly, heterohexadecamer of 8 large chains and 8 small chains; disulfide-linked. The disulfide link is formed within the large subunit homodimers. Mg(2+) serves as cofactor. Post-translationally, the disulfide bond which can form in the large chain dimeric partners within the hexadecamer appears to be associated with oxidative stress and protein turnover.

The protein localises to the plastid. Its subcellular location is the chloroplast. The catalysed reaction is 2 (2R)-3-phosphoglycerate + 2 H(+) = D-ribulose 1,5-bisphosphate + CO2 + H2O. It carries out the reaction D-ribulose 1,5-bisphosphate + O2 = 2-phosphoglycolate + (2R)-3-phosphoglycerate + 2 H(+). In terms of biological role, ruBisCO catalyzes two reactions: the carboxylation of D-ribulose 1,5-bisphosphate, the primary event in carbon dioxide fixation, as well as the oxidative fragmentation of the pentose substrate in the photorespiration process. Both reactions occur simultaneously and in competition at the same active site. This chain is Ribulose bisphosphate carboxylase large chain, found in Heuchera micrantha (Alum root).